Here is a 435-residue protein sequence, read N- to C-terminus: ATP-dependent protease ATPase subunit HslU (435 aa).

Residues Ile18, 60–65, Asp248, Glu313, and Arg385 contribute to the ATP site; that span reads GVGKTE.

The protein belongs to the ClpX chaperone family. HslU subfamily. As to quaternary structure, a double ring-shaped homohexamer of HslV is capped on each side by a ring-shaped HslU homohexamer. The assembly of the HslU/HslV complex is dependent on binding of ATP.

It localises to the cytoplasm. In terms of biological role, ATPase subunit of a proteasome-like degradation complex; this subunit has chaperone activity. The binding of ATP and its subsequent hydrolysis by HslU are essential for unfolding of protein substrates subsequently hydrolyzed by HslV. HslU recognizes the N-terminal part of its protein substrates and unfolds these before they are guided to HslV for hydrolysis. This chain is ATP-dependent protease ATPase subunit HslU, found in Rhizobium etli (strain CIAT 652).